Consider the following 505-residue polypeptide: MTDKYIMAIDEGTTSTRAIIFDHAGHKVADSQREFPQYFPQPGWVEHNANEIWNAVLSTIANAFIESGIKPAQISGIGITNQRETTIVWDKQTGLPIYNAIVWQSRQTAPIAEKLVKDGYGDLIHQHTGLVTDAYFSATKIRWILDHVKGAQERAEKGELLFGTIDTWLLWKLTGGATHVTDYSNASRTMLFNIHDLKWDDQILQLLNIPAAMLPEVRTNSEVYGKTKDYHFFGSEVPISGMAGDQQAALFGQLAFEPGTVKNTYGTGAFIVMNTGEKPQLSDNNLLTTIGYGINGKVYYALEGSIFVAGSAIQWLRDGIRLVESAPDSERAARESHNENEVYVVPAFTGLGAPYWDSEARGSVFGLTRGTTREDFIKATLQALAYQTRDVVETMKKDSGIEIPVLKVDGGAARNDWLMQFQADILDTQIMRAANLETTALGAAFLAGLSVGYWQDLEELKASYKPGTSFDPEMGPAERTNLYEGWQAAVKATQVFKHTPYHAGK.

An ADP-binding site is contributed by Thr-13. Positions 13, 14, and 15 each coordinate ATP. Position 13 (Thr-13) interacts with sn-glycerol 3-phosphate. ADP is bound at residue Arg-17. Sn-glycerol 3-phosphate contacts are provided by Arg-83, Glu-84, and Tyr-135. Residues Arg-83, Glu-84, and Tyr-135 each coordinate glycerol. His-231 carries the post-translational modification Phosphohistidine; by HPr. Sn-glycerol 3-phosphate is bound at residue Asp-245. The glycerol site is built by Asp-245 and Gln-246. Positions 267 and 310 each coordinate ADP. Residues Thr-267, Gly-310, Gln-314, and Gly-411 each coordinate ATP. Positions 411 and 415 each coordinate ADP.

This sequence belongs to the FGGY kinase family. In terms of assembly, homotetramer and homodimer (in equilibrium). Post-translationally, the phosphoenolpyruvate-dependent sugar phosphotransferase system (PTS), including enzyme I, and histidine-containing protein (HPr) are required for the phosphorylation, which leads to the activation of the enzyme.

The catalysed reaction is glycerol + ATP = sn-glycerol 3-phosphate + ADP + H(+). It participates in polyol metabolism; glycerol degradation via glycerol kinase pathway; sn-glycerol 3-phosphate from glycerol: step 1/1. Its activity is regulated as follows. Activated by phosphorylation and inhibited by fructose 1,6-bisphosphate (FBP). Key enzyme in the regulation of glycerol uptake and metabolism. Catalyzes the phosphorylation of glycerol to yield sn-glycerol 3-phosphate. The chain is Glycerol kinase 1 from Lactiplantibacillus plantarum (strain ATCC BAA-793 / NCIMB 8826 / WCFS1) (Lactobacillus plantarum).